The sequence spans 501 residues: Dihydrolipoyl dehydrogenase, mitochondrial (501 aa).

Residues Met1 to Phe31 constitute a mitochondrion transit peptide. FAD-binding positions include Glu67–Cys76, Lys85, Gly149, and Thr178–Ser180. Cys76 and Cys81 are disulfide-bonded. NAD(+)-binding positions include Gly215 to Glu222, Glu238, Val272, and Gly307. FAD contacts are provided by residues Asp348 and Met354–His357. His480 functions as the Proton acceptor in the catalytic mechanism.

It belongs to the class-I pyridine nucleotide-disulfide oxidoreductase family. In terms of assembly, homodimer. Requires FAD as cofactor.

Its subcellular location is the mitochondrion matrix. The enzyme catalyses N(6)-[(R)-dihydrolipoyl]-L-lysyl-[protein] + NAD(+) = N(6)-[(R)-lipoyl]-L-lysyl-[protein] + NADH + H(+). Its function is as follows. Lipoamide dehydrogenase is a component of the glycine cleavage system as well as of the alpha-ketoacid dehydrogenase complexes. The pyruvate dehydrogenase complex contains multiple copies of three enzymatic components: pyruvate dehydrogenase (E1), dihydrolipoamide acetyltransferase (E2) and lipoamide dehydrogenase (E3). This is Dihydrolipoyl dehydrogenase, mitochondrial (LPD) from Pisum sativum (Garden pea).